Consider the following 487-residue polypeptide: Ribosome biogenesis protein YTM1 (487 aa).

The ubiquitin-like (UBL) domain stretch occupies residues 13–95 (VKVTFTTNEA…ETNLTLQYVR (83 aa)). 5 WD repeats span residues 122-161 (SPAG…LVTA), 168-206 (GHSA…ASGQ), 217-256 (GHRA…SPEA), 379-419 (GHTN…PASG), and 451-487 (GEGA…VVRE). The tract at residues 253-277 (SPEADASLLPNAHTSKRRKVASSVT) is disordered.

Belongs to the WD repeat WDR12/YTM1 family. Component of the NOP7 complex, composed of ERB1, NOP7 and YTM1. The complex is held together by ERB1, which interacts with NOP7 via its N-terminal domain and with YTM1 via a high-affinity interaction between the seven-bladed beta-propeller domains of the 2 proteins. The NOP7 complex associates with the 66S pre-ribosome. Interacts (via UBL domain) with MDN1 (via VWFA/MIDAS domain).

It localises to the nucleus. The protein resides in the nucleolus. Its subcellular location is the nucleoplasm. Functionally, component of the NOP7 complex, which is required for maturation of the 25S and 5.8S ribosomal RNAs and formation of the 60S ribosome. The chain is Ribosome biogenesis protein YTM1 from Podospora anserina (strain S / ATCC MYA-4624 / DSM 980 / FGSC 10383) (Pleurage anserina).